The chain runs to 256 residues: uncharacterized protein (256 aa).

Positions 211-256 (RKLQASVTTTPPKRCKLADRPAQTTQDTPRAPQPAPVRAQRPLFTL) are disordered. Residues 246–256 (PVRAQRPLFTL) are compositionally biased toward low complexity.

This is an uncharacterized protein from Orgyia pseudotsugata (Douglas-fir tussock moth).